Reading from the N-terminus, the 192-residue chain is Fanconi anemia core complex-associated protein 20 (192 aa).

Basic residues predominate over residues 1 to 16 (MEATRRSRLSLSRRRP). Disordered stretches follow at residues 1–34 (MEATRRSRLSLSRRRPPLGVRPRSNTAGSLPDGG) and 51–151 (LNVD…SSVD). Over residues 66–76 (QEPRRSPERPP) the composition is skewed to basic and acidic residues. Phosphoserine occurs at positions 119 and 149. Low complexity predominate over residues 132 to 149 (PSAEEQPSEEQPSQRQSS). The segment at 156–192 (LQSCPMCQVDFAPGLAQLDIDGHLAQCLADSTDDIEW) adopts a UBZ2-type zinc-finger fold. Zn(2+) is bound by residues Cys-159, Cys-162, His-178, and Cys-182.

Component of the Fanconi anemia (FA) complex. Interacts with FANCA; interaction is direct. Interacts with REV1.

The protein resides in the nucleus. The protein localises to the chromosome. Functionally, component of the Fanconi anemia (FA) complex required to recruit the FA complex to DNA interstrand cross-links (ICLs) and promote ICLs repair. Following DNA damage recognizes and binds 'Lys-63'-linked ubiquitin generated by RNF8 at ICLs and recruits other components of the FA complex. Promotes translesion synthesis via interaction with REV1. The polypeptide is Fanconi anemia core complex-associated protein 20 (Bos taurus (Bovine)).